A 251-amino-acid chain; its full sequence is Isopentenyl-diphosphate delta-isomerase (251 aa).

Lys-49 contributes to the substrate binding site. 2 residues coordinate Mg(2+): His-53 and His-66. The 149-residue stretch at 64–212 folds into the Nudix hydrolase domain; it reads LLHRAFSVFL…SNSFTPWFKL (149 aa). Substrate contacts are provided by Arg-86 and Lys-90. Cys-102 is a catalytic residue. Ser-103 serves as a coordination point for substrate. Residues Glu-162 and Glu-164 each coordinate Mg(2+). Glu-164 is an active-site residue.

This sequence belongs to the IPP isomerase type 1 family. Mg(2+) serves as cofactor.

The protein resides in the cytoplasm. The enzyme catalyses isopentenyl diphosphate = dimethylallyl diphosphate. It functions in the pathway isoprenoid biosynthesis; dimethylallyl diphosphate biosynthesis; dimethylallyl diphosphate from isopentenyl diphosphate: step 1/1. Isopentenyl-diphosphate delta-isomerase; part of the second module of ergosterol biosynthesis pathway that includes the middle steps of the pathway. The second module is carried out in the vacuole and involves the formation of farnesyl diphosphate, which is also an important intermediate in the biosynthesis of ubiquinone, dolichol, heme and prenylated proteins. Activity by the mevalonate kinase first converts mevalonate into 5-phosphomevalonate. 5-phosphomevalonate is then further converted to 5-diphosphomevalonate by the phosphomevalonate kinase. The diphosphomevalonate decarboxylase then produces isopentenyl diphosphate. The isopentenyl-diphosphate delta-isomerase then catalyzes the 1,3-allylic rearrangement of the homoallylic substrate isopentenyl (IPP) to its highly electrophilic allylic isomer, dimethylallyl diphosphate (DMAPP). Finally the farnesyl diphosphate synthase catalyzes the sequential condensation of isopentenyl pyrophosphate with dimethylallyl pyrophosphate, and then with the resultant geranylpyrophosphate to the ultimate product farnesyl pyrophosphate. This Phaffia rhodozyma (Yeast) protein is Isopentenyl-diphosphate delta-isomerase.